Consider the following 423-residue polypeptide: Serine hydroxymethyltransferase (423 aa).

(6S)-5,6,7,8-tetrahydrofolate-binding positions include L120 and 124 to 126; that span reads GHL. Position 229 is an N6-(pyridoxal phosphate)lysine (K229). 353 to 355 provides a ligand contact to (6S)-5,6,7,8-tetrahydrofolate; it reads SPF.

This sequence belongs to the SHMT family. Homodimer. Pyridoxal 5'-phosphate is required as a cofactor.

The protein localises to the cytoplasm. The enzyme catalyses (6R)-5,10-methylene-5,6,7,8-tetrahydrofolate + glycine + H2O = (6S)-5,6,7,8-tetrahydrofolate + L-serine. It participates in one-carbon metabolism; tetrahydrofolate interconversion. It functions in the pathway amino-acid biosynthesis; glycine biosynthesis; glycine from L-serine: step 1/1. Functionally, catalyzes the reversible interconversion of serine and glycine with tetrahydrofolate (THF) serving as the one-carbon carrier. This reaction serves as the major source of one-carbon groups required for the biosynthesis of purines, thymidylate, methionine, and other important biomolecules. Also exhibits THF-independent aldolase activity toward beta-hydroxyamino acids, producing glycine and aldehydes, via a retro-aldol mechanism. This is Serine hydroxymethyltransferase from Prochlorococcus marinus (strain MIT 9515).